The primary structure comprises 24 residues: Brevinin-1R (24 aa).

Cysteines 18 and 24 form a disulfide.

In terms of tissue distribution, expressed by the skin glands.

The protein localises to the secreted. Its function is as follows. Antimicrobial peptide. This chain is Brevinin-1R, found in Pelophylax ridibundus (Marsh frog).